The chain runs to 1072 residues: Error-prone DNA polymerase (1072 aa).

This sequence belongs to the DNA polymerase type-C family. DnaE2 subfamily.

Its subcellular location is the cytoplasm. It carries out the reaction DNA(n) + a 2'-deoxyribonucleoside 5'-triphosphate = DNA(n+1) + diphosphate. Functionally, DNA polymerase involved in damage-induced mutagenesis and translesion synthesis (TLS). It is not the major replicative DNA polymerase. This chain is Error-prone DNA polymerase, found in Burkholderia pseudomallei (strain K96243).